Reading from the N-terminus, the 477-residue chain is V-type proton ATPase subunit B (477 aa).

Residue arginine 365 participates in ATP binding.

The protein belongs to the ATPase alpha/beta chains family. V-ATPase is a heteromultimeric enzyme composed of a peripheral catalytic V1 complex (components A to H) attached to an integral membrane V0 proton pore complex (components: a, c, c', c'', d, e, f and VOA1).

Its subcellular location is the vacuole membrane. In terms of biological role, non-catalytic subunit of the V1 complex of vacuolar(H+)-ATPase (V-ATPase), a multisubunit enzyme composed of a peripheral complex (V1) that hydrolyzes ATP and a membrane integral complex (V0) that translocates protons. V-ATPase is responsible for acidifying and maintaining the pH of intracellular compartments. The chain is V-type proton ATPase subunit B from Encephalitozoon cuniculi (strain GB-M1) (Microsporidian parasite).